The sequence spans 364 residues: N-acetyl-gamma-glutamyl-phosphate reductase (364 aa).

C157 is an active-site residue.

It belongs to the NAGSA dehydrogenase family. Type 1 subfamily.

The protein localises to the cytoplasm. It catalyses the reaction N-acetyl-L-glutamate 5-semialdehyde + phosphate + NADP(+) = N-acetyl-L-glutamyl 5-phosphate + NADPH + H(+). Its pathway is amino-acid biosynthesis; L-arginine biosynthesis; N(2)-acetyl-L-ornithine from L-glutamate: step 3/4. Its function is as follows. Catalyzes the NADPH-dependent reduction of N-acetyl-5-glutamyl phosphate to yield N-acetyl-L-glutamate 5-semialdehyde. The chain is N-acetyl-gamma-glutamyl-phosphate reductase from Bifidobacterium longum (strain NCC 2705).